A 189-amino-acid chain; its full sequence is UPF0301 protein PFLU_5755 (189 aa).

The protein belongs to the UPF0301 (AlgH) family.

In Pseudomonas fluorescens (strain SBW25), this protein is UPF0301 protein PFLU_5755.